The sequence spans 265 residues: MLLWPLRGWAARALRCFGPGSRGSPASGPGPRRVQRRAWPPDKEQEKEKKSVICVEGNIASGKTTCLEFFSNATDVEVLTEPVSKWRNVRGHNPLGLMYHDASRWGLTLQTYVQLTMLDRHTRPQVSSVRLMERSIHSARYIFVENLYRSGKMPEVDYVVLSEWFDWILRNMDVSVDLIVYLRTNPETCYQRLKKRCREEEKVIPLEYLEAIHHLHEEWLIKGSLFPMAAPVLVIEADHHMERMLELFEQNRDRILTPENRKHCP.

The transit peptide at 1-33 (MLLWPLRGWAARALRCFGPGSRGSPASGPGPRR) directs the protein to the mitochondrion. A compositionally biased stretch (low complexity) spans 20-32 (GSRGSPASGPGPR). A disordered region spans residues 20–47 (GSRGSPASGPGPRRVQRRAWPPDKEQEK). 57–65 (GNIASGKTT) provides a ligand contact to ATP. The active-site Proton acceptor is the E133.

Belongs to the DCK/DGK family. As to quaternary structure, monomer. In terms of tissue distribution, predominantly expressed in liver, pancreas, muscle, and brain.

Its subcellular location is the mitochondrion. The catalysed reaction is thymidine + ATP = dTMP + ADP + H(+). The enzyme catalyses 2'-deoxycytidine + ATP = dCMP + ADP + H(+). It catalyses the reaction 2'-deoxyuridine + ATP = dUMP + ADP + H(+). Functionally, phosphorylates thymidine, deoxycytidine, and deoxyuridine in the mitochondrial matrix. In non-replicating cells, where cytosolic dNTP synthesis is down-regulated, mtDNA synthesis depends solely on TK2 and DGUOK. Widely used as target of antiviral and chemotherapeutic agents. The sequence is that of Thymidine kinase 2, mitochondrial from Homo sapiens (Human).